We begin with the raw amino-acid sequence, 341 residues long: uncharacterized protein (341 aa).

4 helical membrane passes run 8–28, 63–83, 171–191, and 317–337; these read LMLT…PLII, LMYF…VFAL, IYIM…IALS, and EFLV…KIFL. A VWFA domain is found at 101 to 305; it reads DIVIVLDISP…SKKENLERKI (205 aa).

Its subcellular location is the cell membrane. This is an uncharacterized protein from Borreliella burgdorferi (strain ATCC 35210 / DSM 4680 / CIP 102532 / B31) (Borrelia burgdorferi).